Reading from the N-terminus, the 431-residue chain is Transposase for insertion sequence element IS232 (431 aa).

The 60-residue stretch at 20–79 folds into the HTH IS21-type domain; sequence PNFKKLMGNLKMKINKSQLARELNVDRRTIDKYLNGFTPKGTKNKTSKIDTYYEVIAALL. Residues 35-54 constitute a DNA-binding region (H-T-H motif); that stretch reads KSQLARELNVDRRTIDKYLN. One can recognise an Integrase catalytic domain in the interval 140-315; sequence YETPPGEQAQ…IPVFALKQEK (176 aa).

It belongs to the transposase IS21/IS408/IS1162 family.

In terms of biological role, involved in the transposition of the insertion sequence. This chain is Transposase for insertion sequence element IS232, found in Bacillus thuringiensis subsp. berliner.